A 387-amino-acid polypeptide reads, in one-letter code: Phosphoglycerate kinase (387 aa).

Residues 21–23 (DLN), R36, 59–62 (HLGR), R113, and R146 contribute to the substrate site. ATP contacts are provided by residues K197, E314, and 340–343 (GGDT).

Belongs to the phosphoglycerate kinase family. As to quaternary structure, monomer.

Its subcellular location is the cytoplasm. The enzyme catalyses (2R)-3-phosphoglycerate + ATP = (2R)-3-phospho-glyceroyl phosphate + ADP. It functions in the pathway carbohydrate degradation; glycolysis; pyruvate from D-glyceraldehyde 3-phosphate: step 2/5. This chain is Phosphoglycerate kinase, found in Pectobacterium carotovorum subsp. carotovorum (strain PC1).